A 533-amino-acid chain; its full sequence is Glucose-6-phosphate isomerase (533 aa).

The Proton donor role is filled by Glu322. Catalysis depends on residues His351 and Lys455.

Belongs to the GPI family.

The protein resides in the cytoplasm. It carries out the reaction alpha-D-glucose 6-phosphate = beta-D-fructose 6-phosphate. It participates in carbohydrate biosynthesis; gluconeogenesis. The protein operates within carbohydrate degradation; glycolysis; D-glyceraldehyde 3-phosphate and glycerone phosphate from D-glucose: step 2/4. Its function is as follows. Catalyzes the reversible isomerization of glucose-6-phosphate to fructose-6-phosphate. The polypeptide is Glucose-6-phosphate isomerase (Desulfitobacterium hafniense (strain Y51)).